Consider the following 165-residue polypeptide: UPF0763 protein NIS_0363 (165 aa).

This sequence belongs to the UPF0763 family.

This chain is UPF0763 protein NIS_0363, found in Nitratiruptor sp. (strain SB155-2).